Here is a 1372-residue protein sequence, read N- to C-terminus: DNA-directed RNA polymerase subunit beta' (1372 aa).

Cys69, Cys71, Cys84, and Cys87 together coordinate Zn(2+). Asp460, Asp462, and Asp464 together coordinate Mg(2+). Cys808, Cys882, Cys889, and Cys892 together coordinate Zn(2+).

It belongs to the RNA polymerase beta' chain family. As to quaternary structure, the RNAP catalytic core consists of 2 alpha, 1 beta, 1 beta' and 1 omega subunit. When a sigma factor is associated with the core the holoenzyme is formed, which can initiate transcription. Mg(2+) is required as a cofactor. It depends on Zn(2+) as a cofactor.

The enzyme catalyses RNA(n) + a ribonucleoside 5'-triphosphate = RNA(n+1) + diphosphate. Its function is as follows. DNA-dependent RNA polymerase catalyzes the transcription of DNA into RNA using the four ribonucleoside triphosphates as substrates. The protein is DNA-directed RNA polymerase subunit beta' of Rickettsia prowazekii (strain Madrid E).